The following is a 288-amino-acid chain: Aquaporin PIP1-5 (288 aa).

The tract at residues 1–36 (MEGKEEDVRLGANRYSERQPIGTAAQGTEEKDYKEP) is disordered. 2 consecutive transmembrane segments (helical) span residues 57 to 77 (IAEF…VMGV) and 92 to 114 (IAWS…SGGH). The short motif at 116 to 118 (NPA) is the NPA 1 element. Helical transmembrane passes span 135–155 (LFYM…VKGF), 177–197 (GDGL…VFSA), and 211–231 (ILAP…TIPI). An NPA 2 motif is present at residues 237-239 (NPA). The chain crosses the membrane as a helical span at residues 259-279 (IFWVGPFIGAALAAIYHVVII).

This sequence belongs to the MIP/aquaporin (TC 1.A.8) family. PIP (TC 1.A.8.11) subfamily. In terms of tissue distribution, highly expressed in roots and at lower levels in anthers and silks.

It is found in the cell membrane. In terms of biological role, water channel required to facilitate the transport of water across cell membrane. This Zea mays (Maize) protein is Aquaporin PIP1-5 (PIP1-5).